Consider the following 288-residue polypeptide: Inorganic pyrophosphatase (288 aa).

Arg-80 lines the diphosphate pocket. Residues Asp-117, Asp-122, and Asp-154 each contribute to the Mg(2+) site. Positions 252 to 271 (TPSYSDAAAQEIPSASPAPA) are disordered. A compositionally biased stretch (low complexity) spans 258 to 271 (AAAQEIPSASPAPA).

The protein belongs to the PPase family. Requires Mg(2+) as cofactor.

The protein localises to the cytoplasm. The enzyme catalyses diphosphate + H2O = 2 phosphate + H(+). The polypeptide is Inorganic pyrophosphatase (IPP1) (Candida albicans (strain SC5314 / ATCC MYA-2876) (Yeast)).